Consider the following 340-residue polypeptide: Nitrilase (340 aa).

The CN hydrolase domain maps to 7 to 273 (IRAAAVQIAP…EGMVVADLDM (267 aa)). Catalysis depends on E47, which acts as the Proton acceptor. The active site involves K129. Catalysis depends on C163, which acts as the Nucleophile.

It belongs to the carbon-nitrogen hydrolase superfamily. Nitrilase family. As to quaternary structure, forms oligomers.

It carries out the reaction a nitrile + 2 H2O = a carboxylate + NH4(+). The enzyme catalyses phenylpropanonitrile + 2 H2O = 3-phenylpropanoate + NH4(+). The catalysed reaction is an aliphatic nitrile + 2 H2O = a carboxylate + NH4(+). With respect to regulation, highly resistant to various miscible cosolvents and tolerates high substrate concentrations. Functionally, catalyzes the hydrolysis of a broad range of nitriles to yield their corresponding carboxylic acid and ammonia. In vitro, shows high activity toward benzylic/unsaturated nitriles. The preferred substrate is trans-cinnamonitrile, followed by mono/di-cyanopyridines and aromatic substituted nitriles, with a moderate activity toward 3-phenylpropionitrile. Shows weaker activity toward the common dinitrile fumaronitrile. Also shows weak activity toward some aliphatic nitriles, including adiponitrile and glutaronitrile, and the arylacetonitrile 2-thiopheneacetonitrile. In Paraburkholderia phymatum (strain DSM 17167 / CIP 108236 / LMG 21445 / STM815) (Burkholderia phymatum), this protein is Nitrilase.